The following is an 825-amino-acid chain: Penicillin-binding protein 1A (825 aa).

At 1 to 6 the chain is on the cytoplasmic side; that stretch reads MKFIKR. A helical; Signal-anchor for type II membrane protein transmembrane segment spans residues 7-27; sequence LLVFSLICIILGVTTIFGFYF. Over 28–825 the chain is Periplasmic; sequence YVKSDLPDVA…YSTSSGEELF (798 aa). Positions 48–216 are transglycosylase; sequence MQVFSQDGKL…STMNPIYSVE (169 aa). Glu86 functions as the Proton donor; for transglycosylase activity in the catalytic mechanism. Residues 413 to 752 are transpeptidase; that stretch reads PRTQDGAITA…GKTALPAWVE (340 aa). Residue Ser471 is the Acyl-ester intermediate; for transpeptidase activity of the active site.

The protein in the N-terminal section; belongs to the glycosyltransferase 51 family. It in the C-terminal section; belongs to the transpeptidase family.

Its subcellular location is the cell inner membrane. The catalysed reaction is [GlcNAc-(1-&gt;4)-Mur2Ac(oyl-L-Ala-gamma-D-Glu-L-Lys-D-Ala-D-Ala)](n)-di-trans,octa-cis-undecaprenyl diphosphate + beta-D-GlcNAc-(1-&gt;4)-Mur2Ac(oyl-L-Ala-gamma-D-Glu-L-Lys-D-Ala-D-Ala)-di-trans,octa-cis-undecaprenyl diphosphate = [GlcNAc-(1-&gt;4)-Mur2Ac(oyl-L-Ala-gamma-D-Glu-L-Lys-D-Ala-D-Ala)](n+1)-di-trans,octa-cis-undecaprenyl diphosphate + di-trans,octa-cis-undecaprenyl diphosphate + H(+). It catalyses the reaction Preferential cleavage: (Ac)2-L-Lys-D-Ala-|-D-Ala. Also transpeptidation of peptidyl-alanyl moieties that are N-acyl substituents of D-alanine.. It participates in cell wall biogenesis; peptidoglycan biosynthesis. Its function is as follows. Cell wall formation. Synthesis of cross-linked peptidoglycan from the lipid intermediates. The enzyme has a penicillin-insensitive transglycosylase N-terminal domain (formation of linear glycan strands) and a penicillin-sensitive transpeptidase C-terminal domain (cross-linking of the peptide subunits). The chain is Penicillin-binding protein 1A (mrcA) from Vibrio cholerae serotype O1 (strain ATCC 39315 / El Tor Inaba N16961).